Here is an 83-residue protein sequence, read N- to C-terminus: Exodeoxyribonuclease 7 small subunit (83 aa).

It belongs to the XseB family. Heterooligomer composed of large and small subunits.

The protein localises to the cytoplasm. The enzyme catalyses Exonucleolytic cleavage in either 5'- to 3'- or 3'- to 5'-direction to yield nucleoside 5'-phosphates.. In terms of biological role, bidirectionally degrades single-stranded DNA into large acid-insoluble oligonucleotides, which are then degraded further into small acid-soluble oligonucleotides. This is Exodeoxyribonuclease 7 small subunit from Heliobacterium modesticaldum (strain ATCC 51547 / Ice1).